The chain runs to 200 residues: Dephospho-CoA kinase (200 aa).

The 198-residue stretch at 3–200 (VLGLTGSIGM…LSGKPAAATR (198 aa)) folds into the DPCK domain. 11 to 16 (GMGKTT) provides a ligand contact to ATP.

Belongs to the CoaE family.

The protein localises to the cytoplasm. The catalysed reaction is 3'-dephospho-CoA + ATP = ADP + CoA + H(+). Its pathway is cofactor biosynthesis; coenzyme A biosynthesis; CoA from (R)-pantothenate: step 5/5. Functionally, catalyzes the phosphorylation of the 3'-hydroxyl group of dephosphocoenzyme A to form coenzyme A. The polypeptide is Dephospho-CoA kinase (Brucella abortus (strain 2308)).